Consider the following 538-residue polypeptide: Small ribosomal subunit protein uS3m (538 aa).

The disordered stretch occupies residues 111-134; sequence SSEGTEEERNEVRGRGAGKRVESI. A compositionally biased stretch (basic and acidic residues) spans 120–134; that stretch reads NEVRGRGAGKRVESI.

Belongs to the universal ribosomal protein uS3 family.

Its subcellular location is the mitochondrion. The polypeptide is Small ribosomal subunit protein uS3m (RPS3) (Oryza sativa subsp. japonica (Rice)).